A 120-amino-acid polypeptide reads, in one-letter code: Small ribosomal subunit protein uS13 (120 aa).

A disordered region spans residues 93-120 (RRGLPCRGQKTKTNARTRKGKRKTVGAA).

The protein belongs to the universal ribosomal protein uS13 family. In terms of assembly, part of the 30S ribosomal subunit. Forms a loose heterodimer with protein S19. Forms two bridges to the 50S subunit in the 70S ribosome.

Its function is as follows. Located at the top of the head of the 30S subunit, it contacts several helices of the 16S rRNA. In the 70S ribosome it contacts the 23S rRNA (bridge B1a) and protein L5 of the 50S subunit (bridge B1b), connecting the 2 subunits; these bridges are implicated in subunit movement. Contacts the tRNAs in the A and P-sites. The chain is Small ribosomal subunit protein uS13 from Sulfurimonas denitrificans (strain ATCC 33889 / DSM 1251) (Thiomicrospira denitrificans (strain ATCC 33889 / DSM 1251)).